Here is a 538-residue protein sequence, read N- to C-terminus: Syncytin-2 (538 aa).

The signal sequence occupies residues 1-15; the sequence is MGLLLLVLILTPSLA. The Extracellular segment spans residues 16-478; sequence AYRHPDFPLL…GWLNWEGTWK (463 aa). The CXXC motif lies at 43-46; the sequence is CWLC. Intrachain disulfides connect cysteine 43-cysteine 46, cysteine 43-cysteine 439, and cysteine 431-cysteine 438. 8 N-linked (GlcNAc...) asparagine glycosylation sites follow: asparagine 133, asparagine 146, asparagine 177, asparagine 220, asparagine 241, asparagine 247, asparagine 312, and asparagine 332. The segment at 354-374 is fusion peptide; the sequence is FIPLLAGLGILAGTGTGIAGI. Residues 414 to 430 carry the CKS-17 motif; sequence LQNRRGLDMLTAAQGGI. The short motif at 431-439 is the CX6CC element; that stretch reads CLALDEKCC. Asparagine 443 carries an N-linked (GlcNAc...) asparagine glycan. The helical transmembrane segment at 479–499 threads the bilayer; that stretch reads WFSWVLPLTGPLVSLLLLLLF. Residues 500-538 lie on the Cytoplasmic side of the membrane; the sequence is GPCLLNLITQFVSSRLQAIKLQTNLSAGRHPRNIQESPF.

The protein belongs to the gamma type-C retroviral envelope protein family. HERV class-I FRD env subfamily. In terms of assembly, the surface and transmembrane proteins form a heterodimer. They are attached by non-covalent interactions or by a labile interchain disulfide bond. Interacts with MFSD2A. Post-translationally, specific enzymatic cleavages in vivo yield the mature SU and TM proteins. The CXXC motif is highly conserved across a broad range of retroviral envelope proteins. It is thought to participate in the formation of a labile disulfide bond possibly with the CX6CC motif present in the transmembrane protein. Isomerization of the intersubunit disulfide bond to an SU intrachain disulfide bond is thought to occur upon receptor recognition in order to allow membrane fusion. Expressed at higher level in placenta. Expressed at lower level in adrenal, bone marrow, brain, breast, colon, kidney, lung, ovary, peripheral blood lymphocytes, prostate, skin, spleen, testis, thymus, thyroid, trachea.

Its subcellular location is the virion. It localises to the cell membrane. In terms of biological role, this endogenous retroviral envelope protein has retained its original fusogenic properties and participates in trophoblast fusion and the formation of a syncytium during placenta morphogenesis. The interaction with MFSD2A is apparently important for this process. Its function is as follows. Endogenous envelope proteins may have kept, lost or modified their original function during evolution but this one can still make pseudotypes with MLV, HIV-1 or SIV-1 virions and confer infectivity. Retroviral envelope proteins mediate receptor recognition and membrane fusion during early infection. The surface protein mediates receptor recognition, while the transmembrane protein anchors the envelope heterodimer to the viral membrane through one transmembrane domain. The other hydrophobic domain, called fusion peptide, mediates fusion of the viral membrane with the target cell membrane. This chain is Syncytin-2 (ERVFRD-1), found in Homo sapiens (Human).